A 1858-amino-acid chain; its full sequence is Nucleoporin NUP188 (1858 aa).

This sequence belongs to the Nup188 family. As to quaternary structure, component of the nuclear pore complex (NPC). NPC constitutes the exclusive means of nucleocytoplasmic transport. NPCs allow the passive diffusion of ions and small molecules and the active, nuclear transport receptor-mediated bidirectional transport of macromolecules such as proteins, RNAs, ribonucleoparticles (RNPs), and ribosomal subunits across the nuclear envelope. Due to its 8-fold rotational symmetry, all subunits are present with 8 copies or multiples thereof. Part of a tetrameric NUP188-NUP170-NIC96-NUP53 module.

The protein resides in the nucleus. It is found in the nuclear pore complex. Its subcellular location is the nucleus membrane. Functionally, functions as a component of the nuclear pore complex (NPC). NPC components, collectively referred to as nucleoporins (NUPs), can play the role of both NPC structural components and of docking or interaction partners for transiently associated nuclear transport factors. NUP188 probably plays an important role in NPC assembly and organization. The protein is Nucleoporin NUP188 (NUP188) of Chaetomium thermophilum (strain DSM 1495 / CBS 144.50 / IMI 039719) (Thermochaetoides thermophila).